The primary structure comprises 225 residues: UPF0758 protein XC_3944 (225 aa).

The MPN domain occupies 102 to 224; the sequence is ALSDPSSVGR…PVSLAERGWV (123 aa). His-173, His-175, and Asp-186 together coordinate Zn(2+). Positions 173 to 186 match the JAMM motif motif; sequence HNHPSGNPEPSEAD.

The protein belongs to the UPF0758 family.

The protein is UPF0758 protein XC_3944 of Xanthomonas campestris pv. campestris (strain 8004).